A 227-amino-acid polypeptide reads, in one-letter code: Prolactin (227 aa).

The first 28 residues, 1–28, serve as a signal peptide directing secretion; the sequence is MDSKWSRRTGSLLLLLVSNLLLCKSTAS. A disulfide bridge connects residues Cys-32 and Cys-39. Residues Ser-54, Ser-62, and Ser-118 each carry the phosphoserine modification. Intrachain disulfides connect Cys-86–Cys-202 and Cys-219–Cys-227.

It belongs to the somatotropin/prolactin family. In terms of assembly, interacts with PRLR.

It localises to the secreted. In terms of biological role, prolactin acts primarily on the mammary gland by promoting lactation. In Oryctolagus cuniculus (Rabbit), this protein is Prolactin (PRL).